We begin with the raw amino-acid sequence, 452 residues long: Pup--protein ligase (452 aa).

Residue Glu9 participates in Mg(2+) binding. Residue Arg53 coordinates ATP. Tyr55 lines the Mg(2+) pocket. The active-site Proton acceptor is Asp57. Glu63 serves as a coordination point for Mg(2+). Residues Thr66 and Trp419 each contribute to the ATP site.

The protein belongs to the Pup ligase/Pup deamidase family. Pup-conjugating enzyme subfamily.

The catalysed reaction is ATP + [prokaryotic ubiquitin-like protein]-L-glutamate + [protein]-L-lysine = ADP + phosphate + N(6)-([prokaryotic ubiquitin-like protein]-gamma-L-glutamyl)-[protein]-L-lysine.. Its pathway is protein degradation; proteasomal Pup-dependent pathway. The protein operates within protein modification; protein pupylation. Functionally, catalyzes the covalent attachment of the prokaryotic ubiquitin-like protein modifier Pup to the proteasomal substrate proteins, thereby targeting them for proteasomal degradation. This tagging system is termed pupylation. The ligation reaction involves the side-chain carboxylate of the C-terminal glutamate of Pup and the side-chain amino group of a substrate lysine. This Salinispora arenicola (strain CNS-205) protein is Pup--protein ligase.